Reading from the N-terminus, the 156-residue chain is Small ribosomal subunit protein uS7 (156 aa).

The protein belongs to the universal ribosomal protein uS7 family. As to quaternary structure, part of the 30S ribosomal subunit. Contacts proteins S9 and S11.

In terms of biological role, one of the primary rRNA binding proteins, it binds directly to 16S rRNA where it nucleates assembly of the head domain of the 30S subunit. Is located at the subunit interface close to the decoding center, probably blocks exit of the E-site tRNA. The polypeptide is Small ribosomal subunit protein uS7 (Geobacillus sp. (strain WCH70)).